The following is a 504-amino-acid chain: Arabinose import ATP-binding protein AraG (504 aa).

ABC transporter domains follow at residues 8-243 and 256-499; these read LSFR…MVGR and YGEE…MPKV. 40 to 47 is a binding site for ATP; the sequence is GENGAGKS.

It belongs to the ABC transporter superfamily. Arabinose importer (TC 3.A.1.2.2) family. In terms of assembly, the complex is composed of two ATP-binding proteins (AraG), two transmembrane proteins (AraH) and a solute-binding protein (AraF).

It localises to the cell inner membrane. It catalyses the reaction L-arabinose(out) + ATP + H2O = L-arabinose(in) + ADP + phosphate + H(+). Functionally, part of the ABC transporter complex AraFGH involved in arabinose import. Responsible for energy coupling to the transport system. The polypeptide is Arabinose import ATP-binding protein AraG (Shigella sonnei (strain Ss046)).